A 277-amino-acid chain; its full sequence is Phosphoenolpyruvate synthase regulatory protein (277 aa).

ADP is bound at residue 157–164; sequence GVSRCGKT.

This sequence belongs to the pyruvate, phosphate/water dikinase regulatory protein family. PSRP subfamily.

The enzyme catalyses [pyruvate, water dikinase] + ADP = [pyruvate, water dikinase]-phosphate + AMP + H(+). The catalysed reaction is [pyruvate, water dikinase]-phosphate + phosphate + H(+) = [pyruvate, water dikinase] + diphosphate. Its function is as follows. Bifunctional serine/threonine kinase and phosphorylase involved in the regulation of the phosphoenolpyruvate synthase (PEPS) by catalyzing its phosphorylation/dephosphorylation. This is Phosphoenolpyruvate synthase regulatory protein from Escherichia coli O6:K15:H31 (strain 536 / UPEC).